The following is a 282-amino-acid chain: 4-diphosphocytidyl-2-C-methyl-D-erythritol kinase (282 aa).

K9 is a catalytic residue. 98–108 (PMGGGLGGGSS) is an ATP binding site. D140 is a catalytic residue.

This sequence belongs to the GHMP kinase family. IspE subfamily. In terms of assembly, homodimer.

It catalyses the reaction 4-CDP-2-C-methyl-D-erythritol + ATP = 4-CDP-2-C-methyl-D-erythritol 2-phosphate + ADP + H(+). It functions in the pathway isoprenoid biosynthesis; isopentenyl diphosphate biosynthesis via DXP pathway; isopentenyl diphosphate from 1-deoxy-D-xylulose 5-phosphate: step 3/6. Functionally, catalyzes the phosphorylation of the position 2 hydroxy group of 4-diphosphocytidyl-2C-methyl-D-erythritol. In Salmonella paratyphi A (strain ATCC 9150 / SARB42), this protein is 4-diphosphocytidyl-2-C-methyl-D-erythritol kinase.